The chain runs to 120 residues: uncharacterized protein (120 aa).

To M.jannaschii MJ1503.

This is an uncharacterized protein from Methanocaldococcus jannaschii (strain ATCC 43067 / DSM 2661 / JAL-1 / JCM 10045 / NBRC 100440) (Methanococcus jannaschii).